The primary structure comprises 150 residues: 3-hydroxyacyl-[acyl-carrier-protein] dehydratase FabZ (150 aa).

The active site involves His52.

The protein belongs to the thioester dehydratase family. FabZ subfamily.

Its subcellular location is the cytoplasm. The enzyme catalyses a (3R)-hydroxyacyl-[ACP] = a (2E)-enoyl-[ACP] + H2O. In terms of biological role, involved in unsaturated fatty acids biosynthesis. Catalyzes the dehydration of short chain beta-hydroxyacyl-ACPs and long chain saturated and unsaturated beta-hydroxyacyl-ACPs. This chain is 3-hydroxyacyl-[acyl-carrier-protein] dehydratase FabZ, found in Albidiferax ferrireducens (strain ATCC BAA-621 / DSM 15236 / T118) (Rhodoferax ferrireducens).